The sequence spans 161 residues: Large ribosomal subunit protein uL11 (161 aa).

It belongs to the universal ribosomal protein uL11 family. In terms of assembly, part of the ribosomal stalk of the 50S ribosomal subunit. Interacts with L10 and the large rRNA to form the base of the stalk. L10 forms an elongated spine to which L12 dimers bind in a sequential fashion forming a multimeric L10(L12)X complex.

Functionally, forms part of the ribosomal stalk which helps the ribosome interact with GTP-bound translation factors. The chain is Large ribosomal subunit protein uL11 from Methanococcoides burtonii (strain DSM 6242 / NBRC 107633 / OCM 468 / ACE-M).